The chain runs to 140 residues: Nucleoside diphosphate kinase (140 aa).

ATP is bound by residues Lys11, Phe59, Arg87, Thr93, Arg104, and Asn114. The active-site Pros-phosphohistidine intermediate is the His117.

Belongs to the NDK family. Homotetramer. Mg(2+) serves as cofactor.

It is found in the cytoplasm. It carries out the reaction a 2'-deoxyribonucleoside 5'-diphosphate + ATP = a 2'-deoxyribonucleoside 5'-triphosphate + ADP. It catalyses the reaction a ribonucleoside 5'-diphosphate + ATP = a ribonucleoside 5'-triphosphate + ADP. In terms of biological role, major role in the synthesis of nucleoside triphosphates other than ATP. The ATP gamma phosphate is transferred to the NDP beta phosphate via a ping-pong mechanism, using a phosphorylated active-site intermediate. This is Nucleoside diphosphate kinase from Brucella melitensis biotype 1 (strain ATCC 23456 / CCUG 17765 / NCTC 10094 / 16M).